The sequence spans 113 residues: Iron-sulfur cluster insertion protein ErpA (113 aa).

Iron-sulfur cluster-binding residues include Cys41, Cys105, and Cys107.

This sequence belongs to the HesB/IscA family. In terms of assembly, homodimer. It depends on iron-sulfur cluster as a cofactor.

In terms of biological role, required for insertion of 4Fe-4S clusters for at least IspG. In Actinobacillus pleuropneumoniae serotype 5b (strain L20), this protein is Iron-sulfur cluster insertion protein ErpA.